Reading from the N-terminus, the 273-residue chain is Undecaprenyl-diphosphatase (273 aa).

8 helical membrane passes run 18-40 (GLTEFLPVSSTGHMILVGSLLGF), 45-65 (AKTFEVIIQLGSILAVVVVFW), 92-112 (GHILLGMIPAVVLGLVFHEQI), 114-134 (AIFAPIYVMYALVVGGVLLLA), 151-171 (LTYLQAFLIGCFQCLALWPGF), 189-209 (YAASEFSFILAVPMMLGATVL), 225-245 (MFAIGFVTAFVVALLAIKFFL), and 253-273 (FVPFAIYRFILAVVVYWILIG).

This sequence belongs to the UppP family.

Its subcellular location is the cell inner membrane. The enzyme catalyses di-trans,octa-cis-undecaprenyl diphosphate + H2O = di-trans,octa-cis-undecaprenyl phosphate + phosphate + H(+). In terms of biological role, catalyzes the dephosphorylation of undecaprenyl diphosphate (UPP). Confers resistance to bacitracin. This Sodalis glossinidius (strain morsitans) protein is Undecaprenyl-diphosphatase.